A 655-amino-acid polypeptide reads, in one-letter code: tRNA-guanine(15) transglycosylase (655 aa).

Catalysis depends on aspartate 89, which acts as the Nucleophile. Substrate-binding residues include aspartate 124 and alanine 195. Positions 281, 283, and 286 each coordinate Zn(2+). A PUA domain is found at 577-652; the sequence is KYRVVVNKEA…LAVKVRGGLK (76 aa).

It belongs to the archaeosine tRNA-ribosyltransferase family. Requires Zn(2+) as cofactor.

It carries out the reaction guanosine(15) in tRNA + 7-cyano-7-deazaguanine = 7-cyano-7-carbaguanosine(15) in tRNA + guanine. It participates in tRNA modification; archaeosine-tRNA biosynthesis. Functionally, exchanges the guanine residue with 7-cyano-7-deazaguanine (preQ0) at position 15 in the dihydrouridine loop (D-loop) of archaeal tRNAs. Can also utilize guanine as substrate. This chain is tRNA-guanine(15) transglycosylase, found in Methanocaldococcus jannaschii (strain ATCC 43067 / DSM 2661 / JAL-1 / JCM 10045 / NBRC 100440) (Methanococcus jannaschii).